The following is a 582-amino-acid chain: MLHIPSSSERPASQPEPERAPPGEPSHESALAGIYEISKILNAPGRLEVTLANVLGLLQSFVQMRHGLVSLFNDDGVPELTVGAGWSEGTDERYRTCVPQKAIHEIVATGRSLMVENVAAETAFSAADREVLGASDSIPVAFIGVPIRVDSTVVGTLTIDRIPEGSSSLLEYDARLLAMVANVIGQTIKLHRLFAGDREQSLVDKDRLEKQTVDRGPPARERKQLQAHGIIGDSPALSALLEKIVVVARSNSTVLLRGESGTGKELVAKAIHESSVRAKRPFVKLNCAALPETVLESELFGHEKGAFTGAVSARKGRFELADKGTLFLDEIGEISPPFQAKLLRVLQEQEFERVGSNHTIKVDVRVIAATNRNLEEAVARSEFRADLYYRISVVPLLLPPLRERRSDIPLLAREFLRKFNSENGRSLTLEASAIDVLMSCKFPGNVRELENCIERTATLSAGTSIVRSDFACSQGQCLSTTLWKSTSYGKTDPAAPMQPVPAKSIIPLAETAPPPQAVCEPGSLAPSGTVLVSGARMADRERVVAAMEKSGWVQAKAARLLGLTPRQVGYALRKYGIEIKRF.

Polar residues predominate over residues 1-11 (MLHIPSSSERP). Residues 1–28 (MLHIPSSSERPASQPEPERAPPGEPSHE) form a disordered region. Residues 16 to 27 (EPERAPPGEPSH) show a composition bias toward basic and acidic residues. One can recognise a GAF domain in the interval 46-188 (RLEVTLANVL…MVANVIGQTI (143 aa)). The Sigma-54 factor interaction domain occupies 230 to 458 (IIGDSPALSA…LENCIERTAT (229 aa)). ATP is bound by residues 258-265 (GESGTGKE) and 321-330 (ADKGTLFLDE). The tract at residues 459–539 (LSAGTSIVRS…VLVSGARMAD (81 aa)) is inter-domain linker. Positions 472 and 477 each coordinate a divalent metal cation. The interval 540-582 (RERVVAAMEKSGWVQAKAARLLGLTPRQVGYALRKYGIEIKRF) is C-terminal DNA-binding domain. Residues 554 to 573 (QAKAARLLGLTPRQVGYALR) constitute a DNA-binding region (H-T-H motif).

As to quaternary structure, interacts with sigma-54.

In terms of biological role, required for activation of most nif operons, which are directly involved in nitrogen fixation. This is Nif-specific regulatory protein (nifA) from Bradyrhizobium diazoefficiens (strain JCM 10833 / BCRC 13528 / IAM 13628 / NBRC 14792 / USDA 110).